The sequence spans 254 residues: Trypsin (254 aa).

An N-terminal signal peptide occupies residues 1–16 (MLRFIAVFALVNCALA). Residues 17–26 (GTLPNDLDGR) constitute a propeptide, activation peptide. Residues 27-252 (IVNGVDTTIE…VRSWIEKTAK (226 aa)) enclose the Peptidase S1 domain. Cysteine 53 and cysteine 69 form a disulfide bridge. Active-site charge relay system residues include histidine 68 and aspartate 113. Disulfide bonds link cysteine 154/cysteine 158, cysteine 178/cysteine 195, and cysteine 204/cysteine 228. Residue serine 208 is the Charge relay system of the active site.

This sequence belongs to the peptidase S1 family.

The protein resides in the secreted. The protein localises to the extracellular space. The enzyme catalyses Preferential cleavage: Arg-|-Xaa, Lys-|-Xaa.. Functionally, involved in digestion of a protein meal. This chain is Trypsin, found in Sarcophaga bullata (Grey flesh fly).